A 288-amino-acid chain; its full sequence is Eukaryotic translation initiation factor 3 subunit F-2 (288 aa).

An MPN domain is found at 12–149 (VLLHPLVLFQ…TRIFCAVATG (138 aa)).

This sequence belongs to the eIF-3 subunit F family. Component of the eukaryotic translation initiation factor 3 (eIF-3) complex. The eIF-3 complex interacts with pix.

Its subcellular location is the cytoplasm. Component of the eukaryotic translation initiation factor 3 (eIF-3) complex, which is involved in protein synthesis of a specialized repertoire of mRNAs and, together with other initiation factors, stimulates binding of mRNA and methionyl-tRNAi to the 40S ribosome. The eIF-3 complex specifically targets and initiates translation of a subset of mRNAs involved in cell proliferation. In Drosophila persimilis (Fruit fly), this protein is Eukaryotic translation initiation factor 3 subunit F-2.